Here is a 112-residue protein sequence, read N- to C-terminus: Large ribosomal subunit protein uL22 (112 aa).

The protein belongs to the universal ribosomal protein uL22 family. In terms of assembly, part of the 50S ribosomal subunit.

This protein binds specifically to 23S rRNA; its binding is stimulated by other ribosomal proteins, e.g. L4, L17, and L20. It is important during the early stages of 50S assembly. It makes multiple contacts with different domains of the 23S rRNA in the assembled 50S subunit and ribosome. Its function is as follows. The globular domain of the protein is located near the polypeptide exit tunnel on the outside of the subunit, while an extended beta-hairpin is found that lines the wall of the exit tunnel in the center of the 70S ribosome. In Mesoplasma florum (strain ATCC 33453 / NBRC 100688 / NCTC 11704 / L1) (Acholeplasma florum), this protein is Large ribosomal subunit protein uL22.